The following is a 519-amino-acid chain: FAD-dependent monooxygenase macF (519 aa).

The first 20 residues, 1-20, serve as a signal peptide directing secretion; sequence MTKMTSIIGILMGVLTTATA. One can recognise an FAD-binding PCMH-type domain in the interval 88–262; the sequence is CRLNASCIVT…TEYDLTTNTG (175 aa). Pros-8alpha-FAD histidine is present on His-125.

Belongs to the oxygen-dependent FAD-linked oxidoreductase family.

The protein operates within secondary metabolite biosynthesis; terpenoid biosynthesis. Functionally, FAD-dependent monooxygenase; part of the gene cluster that mediates the biosynthesis of macrophorins, isoprenoid epoxycyclohexenones containing cyclized drimane moieties. The first step of the pathway is the synthesis of 6-methylsalicylic acid (6-MSA) by the polyketide synthase macA. 6-MSA is then converted to m-cresol by the decarboxylase macB. The cytochrome P450 monooxygenase macC then catalyzes the oxidation of m-cresol to toluquinol. Epoxidation of toluquinol is then performed by the short chain dehydrogenase macD, with the help of macE, and a further prenylation by macG leads to 7-deacetoxyyanuthone A. The next step is the hydroxylation of C-22 of 7-deacetoxyyanuthone A by the cytochrome P450 monooxygenase macH to yield 22-deacetylyanuthone A. O-Mevalon transferase macI then attaches mevalon to the hydroxyl group of 22-deacetylyanuthone A to produce yanuthone E. The terpene cyclase macJ catalyzes the cyclization of 22-deacetylyanuthone A to macrophorin A. MacJ is also able to catalyze cyclization of yanuthone E and 7-deacetoxyyanuthone A to their corresponding macrophorins. The macJ products can be further modified by macH and macJ, as well as by the FAD-dependent monooxygenase macF, to produce additional macrophorins, including 4'-oxomacrophorin A, 4'-oxomacrophorin D and 4'-oxomacrophorin E. The sequence is that of FAD-dependent monooxygenase macF from Penicillium terrestre.